A 437-amino-acid chain; its full sequence is Chromosomal replication initiator protein DnaA (437 aa).

Positions 1 to 72 (MEQFNAFKSL…ESLYEGIKSV (72 aa)) are domain I, interacts with DnaA modulators. Residues 72 to 99 (VNFVNEQDFFFNLAKLEENSRDTLYQNS) form a domain II region. The domain III, AAA+ region stretch occupies residues 100 to 320 (GLSKNYTFQN…GIATKLLFFA (221 aa)). Gly144, Gly146, Lys147, and Thr148 together coordinate ATP. The tract at residues 321–437 (KTSKQNLINT…LRDVITSLVI (117 aa)) is domain IV, binds dsDNA.

The protein belongs to the DnaA family. As to quaternary structure, oligomerizes as a right-handed, spiral filament on DNA at oriC.

It is found in the cytoplasm. Its function is as follows. Plays an essential role in the initiation and regulation of chromosomal replication. ATP-DnaA binds to the origin of replication (oriC) to initiate formation of the DNA replication initiation complex once per cell cycle. Binds the DnaA box (a 9 base pair repeat at the origin) and separates the double-stranded (ds)DNA. Forms a right-handed helical filament on oriC DNA; dsDNA binds to the exterior of the filament while single-stranded (ss)DNA is stabiized in the filament's interior. The ATP-DnaA-oriC complex binds and stabilizes one strand of the AT-rich DNA unwinding element (DUE), permitting loading of DNA polymerase. After initiation quickly degrades to an ADP-DnaA complex that is not apt for DNA replication. Binds acidic phospholipids. In Mycoplasma genitalium (strain ATCC 33530 / DSM 19775 / NCTC 10195 / G37) (Mycoplasmoides genitalium), this protein is Chromosomal replication initiator protein DnaA.